The chain runs to 442 residues: ATP-dependent protease ATPase subunit HslU (442 aa).

Residues I18, 60-65 (GVGKTE), D255, E320, and R392 contribute to the ATP site.

It belongs to the ClpX chaperone family. HslU subfamily. In terms of assembly, a double ring-shaped homohexamer of HslV is capped on each side by a ring-shaped HslU homohexamer. The assembly of the HslU/HslV complex is dependent on binding of ATP.

It is found in the cytoplasm. Its function is as follows. ATPase subunit of a proteasome-like degradation complex; this subunit has chaperone activity. The binding of ATP and its subsequent hydrolysis by HslU are essential for unfolding of protein substrates subsequently hydrolyzed by HslV. HslU recognizes the N-terminal part of its protein substrates and unfolds these before they are guided to HslV for hydrolysis. This chain is ATP-dependent protease ATPase subunit HslU, found in Aeromonas hydrophila subsp. hydrophila (strain ATCC 7966 / DSM 30187 / BCRC 13018 / CCUG 14551 / JCM 1027 / KCTC 2358 / NCIMB 9240 / NCTC 8049).